A 126-amino-acid polypeptide reads, in one-letter code: SFAGKYELQSQENFEAFMKAIGLPDELIQKGKDIKSVSEIQQNGKSFKVTVTTGSKVLENEFTLGEEAELETLTGEKVKSIVKQEGDNKLVVNLKGITSVTELSGDTLINTLQKGDDTYKRISKRI.

Belongs to the calycin superfamily. Fatty-acid binding protein (FABP) family.

It localises to the cytoplasm. Its function is as follows. Binds free fatty acids and their coenzyme A derivatives, bilirubin, and some other small molecules in the cytoplasm. May be involved in intracellular lipid transport. The specificity of axolotl L-FABP differs from that of LB-FABP. The polypeptide is Fatty acid-binding protein 1, liver (Ambystoma mexicanum (Axolotl)).